The chain runs to 690 residues: Protein arginine N-methyltransferase 7 (690 aa).

2 consecutive SAM-dependent MTase PRMT-type domains span residues 14–357 (QNSW…YSLW) and 366–690 (TKSV…QKKL).

This sequence belongs to the class I-like SAM-binding methyltransferase superfamily. Protein arginine N-methyltransferase family. PRMT7 subfamily. In terms of tissue distribution, expressed at low level in ovary.

Its function is as follows. Essential arginine methyltransferase that can both catalyze the formation of omega-N monomethylarginine (MMA) and symmetrical dimethylarginine (sDMA). Specifically mediates the symmetrical dimethylation of arginine residues in the small nuclear ribonucleoproteins SmD1 and SmD3. The sequence is that of Protein arginine N-methyltransferase 7 (Art7) from Drosophila melanogaster (Fruit fly).